We begin with the raw amino-acid sequence, 453 residues long: UDP-glucosyltransferase avaP (453 aa).

Belongs to the UDP-glycosyltransferase family.

The protein operates within secondary metabolite biosynthesis. UDP-glucosyltransferase; part of the cluster that mediates the biosynthesis of a highly modified cyclo-arginine-tryptophan dipeptide (cRW). The first step of the pathway is perfornmed by the arginine-containing cyclodipeptide synthase (RCPDS) avaA that acts as the scaffold-generating enzyme and is responsible for formation of the cyclo-Arg-Trp (cRW) diketopiperazine. AvaB then acts as a multifunctional flavoenzyme that is responsible for generating the cyclo-Arg-formylkynurenine DKP, which can be deformylated by avaC. AvaB then further catalyzes an additional N-oxidation followed by cyclization and dehydration. The next step is an N-acetylation of the guanidine group catalyzed by the arginine N-acetyltransferase avaD. The roles of the additional enzymes identified within the ava cluster still have to be determined. The protein is UDP-glucosyltransferase avaP of Aspergillus versicolor.